The primary structure comprises 217 residues: Coiled-coil domain-containing protein 124-B (217 aa).

Residues 1-123 form a disordered region; that stretch reads MPKKFQSENT…EKPKTHLEIP (123 aa). 3 stretches are compositionally biased toward basic and acidic residues: residues 18–45, 52–74, and 98–123; these read RKAEAKAVADAKRKKETEDAFWQDDDKH, RKEEKEKKRLELLERKKESQRLL, and QIEETLCKEEKHKDAPEKPKTHLEIP. Positions 41–83 form a coiled coil; that stretch reads DDDKHVVRKEHRKEEKEKKRLELLERKKESQRLLDEEDSKMKG.

The protein belongs to the CCDC124 family. Associates with translationally inactive ribosomes in the nonrotated state.

The protein resides in the cytoplasm. It is found in the cytoskeleton. It localises to the microtubule organizing center. Its subcellular location is the centrosome. The protein localises to the midbody. Ribosome-binding protein involved in ribosome hibernation: associates with translationally inactive ribosomes and stabilizes the nonrotated conformation of the 80S ribosome, thereby promoting ribosome preservation and storage. The sequence is that of Coiled-coil domain-containing protein 124-B (ccdc124-b) from Xenopus laevis (African clawed frog).